The following is an 87-amino-acid chain: Glutaredoxin 1 (87 aa).

The Glutaredoxin domain occupies 1–87 (MFTVIFGRPG…WAKENLNLFA (87 aa)). A disulfide bond links cysteine 11 and cysteine 14.

The protein belongs to the glutaredoxin family. In terms of assembly, monomer.

The disulfide bond functions as an electron carrier in the glutathione-dependent synthesis of deoxyribonucleotides by the enzyme ribonucleotide reductase. In addition, it is also involved in reducing some disulfides in a coupled system with glutathione reductase. The protein is Glutaredoxin 1 (grxA) of Salmonella typhi.